A 434-amino-acid polypeptide reads, in one-letter code: UDP-N-acetylglucosamine 1-carboxyvinyltransferase 1 (434 aa).

22–23 (KN) contributes to the phosphoenolpyruvate binding site. Arginine 93 serves as a coordination point for UDP-N-acetyl-alpha-D-glucosamine. The active-site Proton donor is cysteine 117. 2-(S-cysteinyl)pyruvic acid O-phosphothioketal is present on cysteine 117. Residues 122–126 (RPIDQ), aspartate 306, and valine 328 each bind UDP-N-acetyl-alpha-D-glucosamine.

This sequence belongs to the EPSP synthase family. MurA subfamily.

The protein localises to the cytoplasm. The catalysed reaction is phosphoenolpyruvate + UDP-N-acetyl-alpha-D-glucosamine = UDP-N-acetyl-3-O-(1-carboxyvinyl)-alpha-D-glucosamine + phosphate. It functions in the pathway cell wall biogenesis; peptidoglycan biosynthesis. In terms of biological role, cell wall formation. Adds enolpyruvyl to UDP-N-acetylglucosamine. In Bacillus anthracis, this protein is UDP-N-acetylglucosamine 1-carboxyvinyltransferase 1.